The following is an 837-amino-acid chain: Phenylalanine--tRNA ligase beta subunit (837 aa).

One can recognise a tRNA-binding domain in the interval 39 to 149; that stretch reads SASLEGIVTG…EMNIAIPKIG (111 aa). The B5 domain maps to 415-520; that stretch reads IEEQLLLLRR…RLIGYDRFDS (106 aa). Residues aspartate 498, aspartate 504, glutamate 507, and glutamate 508 each contribute to the Mg(2+) site. The region spanning 743 to 836 is the FDX-ACB domain; it reads PTVPSMERDI…LKVEFSAELR (94 aa).

Belongs to the phenylalanyl-tRNA synthetase beta subunit family. Type 1 subfamily. As to quaternary structure, tetramer of two alpha and two beta subunits. The cofactor is Mg(2+).

The protein resides in the cytoplasm. It catalyses the reaction tRNA(Phe) + L-phenylalanine + ATP = L-phenylalanyl-tRNA(Phe) + AMP + diphosphate + H(+). The protein is Phenylalanine--tRNA ligase beta subunit of Prochlorococcus marinus (strain SARG / CCMP1375 / SS120).